The following is a 563-amino-acid chain: NAD-dependent malic enzyme (563 aa).

The active-site Proton donor is Tyr-101. Arg-154 serves as a coordination point for NAD(+). The Proton acceptor role is filled by Lys-172. The a divalent metal cation site is built by Glu-243, Asp-244, and Asp-267. Residues Asp-267 and Asn-416 each coordinate NAD(+).

This sequence belongs to the malic enzymes family. In terms of assembly, homotetramer. Mg(2+) is required as a cofactor. Mn(2+) serves as cofactor.

The catalysed reaction is (S)-malate + NAD(+) = pyruvate + CO2 + NADH. It catalyses the reaction oxaloacetate + H(+) = pyruvate + CO2. The polypeptide is NAD-dependent malic enzyme (Pseudomonas syringae pv. tomato (strain ATCC BAA-871 / DC3000)).